The primary structure comprises 368 residues: 3-dehydroquinate synthase (368 aa).

NAD(+)-binding positions include 112–116 (GVIGD), 136–137 (TT), lysine 149, and lysine 158. Zn(2+)-binding residues include glutamate 191, histidine 256, and histidine 273.

It belongs to the sugar phosphate cyclases superfamily. Dehydroquinate synthase family. It depends on Co(2+) as a cofactor. Zn(2+) is required as a cofactor. NAD(+) serves as cofactor.

The protein resides in the cytoplasm. It catalyses the reaction 7-phospho-2-dehydro-3-deoxy-D-arabino-heptonate = 3-dehydroquinate + phosphate. The protein operates within metabolic intermediate biosynthesis; chorismate biosynthesis; chorismate from D-erythrose 4-phosphate and phosphoenolpyruvate: step 2/7. Its function is as follows. Catalyzes the conversion of 3-deoxy-D-arabino-heptulosonate 7-phosphate (DAHP) to dehydroquinate (DHQ). This is 3-dehydroquinate synthase from Prochlorococcus marinus (strain NATL1A).